Here is a 323-residue protein sequence, read N- to C-terminus: tRNA dimethylallyltransferase (323 aa).

Position 12–19 (12–19 (GPTASGKT)) interacts with ATP. Residue 14–19 (TASGKT) coordinates substrate. 2 interaction with substrate tRNA regions span residues 37-40 (DSAL) and 161-165 (QRLVR).

This sequence belongs to the IPP transferase family. As to quaternary structure, monomer. The cofactor is Mg(2+).

It catalyses the reaction adenosine(37) in tRNA + dimethylallyl diphosphate = N(6)-dimethylallyladenosine(37) in tRNA + diphosphate. Catalyzes the transfer of a dimethylallyl group onto the adenine at position 37 in tRNAs that read codons beginning with uridine, leading to the formation of N6-(dimethylallyl)adenosine (i(6)A). The protein is tRNA dimethylallyltransferase of Stutzerimonas stutzeri (strain A1501) (Pseudomonas stutzeri).